The following is a 450-amino-acid chain: Envelope glycoprotein M (450 aa).

The Intravirion portion of the chain corresponds to Met1–Arg31. A helical membrane pass occupies residues Thr32–Val52. The Virion surface portion of the chain corresponds to Thr53–Ser101. The helical transmembrane segment at Leu102 to Ile122 threads the bilayer. Residues Ser123 to His153 are Intravirion-facing. Residues Val154–Ser174 form a helical membrane-spanning segment. Residues His175–Ala178 lie on the Virion surface side of the membrane. The chain crosses the membrane as a helical span at residues Val179–Phe199. Residues Ser200–Asn236 are Intravirion-facing. A helical transmembrane segment spans residues Leu237–Leu257. Residues Ala258 to Thr270 are Virion surface-facing. The chain crosses the membrane as a helical span at residues Val271 to Val291. Over Ser292–Tyr294 the chain is Intravirion. The chain crosses the membrane as a helical span at residues Val295 to Ala315. At Thr316 to Leu334 the chain is on the virion surface side. A helical membrane pass occupies residues Ala335–Val355. Residues Arg356–Arg450 are Intravirion-facing.

The protein belongs to the herpesviridae glycoprotein M family. In terms of assembly, interacts (via N-terminus) with gN (via N-terminus). The gM-gN heterodimer forms the gCII complex.

The protein localises to the virion membrane. It localises to the host Golgi apparatus. Its subcellular location is the host trans-Golgi network. The protein resides in the host endosome membrane. It is found in the host nucleus inner membrane. In terms of biological role, envelope glycoprotein important for virion assembly and egress. Plays a role in the correct incorporation of gH-gL into virion membrane. Directs the glycoprotein N (gN) to the host trans-Golgi network. This Equus caballus (Horse) protein is Envelope glycoprotein M.